The sequence spans 119 residues: Class I hydrophobin 2 (119 aa).

An N-terminal signal peptide occupies residues 1 to 22; sequence MFARISTIITTLFFAMLAAATA. 4 cysteine pairs are disulfide-bonded: Cys36–Cys97, Cys45–Cys91, Cys46–Cys79, and Cys98–Cys112.

Belongs to the fungal hydrophobin family. Self-assembles to form functional amyloid fibrils called rodlets. Self-assembly into fibrillar rodlets occurs spontaneously at hydrophobic:hydrophilic interfaces and the rodlets further associate laterally to form amphipathic monolayers.

It is found in the secreted. The protein resides in the cell wall. In terms of biological role, aerial growth, conidiation, and dispersal of filamentous fungi in the environment rely upon a capability of their secreting small amphipathic proteins called hydrophobins (HPBs) with low sequence identity. Class I can self-assemble into an outermost layer of rodlet bundles on aerial cell surfaces, conferring cellular hydrophobicity that supports fungal growth, development and dispersal; whereas Class II form highly ordered films at water-air interfaces through intermolecular interactions but contribute nothing to the rodlet structure. Abh2 is a class I hydrophobin involved in the emergence of aerial hyphae and strands. This chain is Class I hydrophobin 2, found in Agaricus bisporus (White button mushroom).